The following is a 159-amino-acid chain: MAKVESFELDHTKVKAPYVRLITVEEGPKGDKISNFDLRLVQPNENAIPTGGLHTIEHLLASLLRDRLDGVIDCSPFGCRTGFHLITWGEHSTTEVAKALRDSLKAIRDDITWEDVPGTTIESCGNYRDHSLFSAQEWCNDILKKGISDDPFDRHVVED.

Fe cation is bound by residues H54, H58, and C124.

The protein belongs to the LuxS family. As to quaternary structure, homodimer. Fe cation is required as a cofactor.

The enzyme catalyses S-(5-deoxy-D-ribos-5-yl)-L-homocysteine = (S)-4,5-dihydroxypentane-2,3-dione + L-homocysteine. In terms of biological role, involved in the synthesis of autoinducer 2 (AI-2) which is secreted by bacteria and is used to communicate both the cell density and the metabolic potential of the environment. The regulation of gene expression in response to changes in cell density is called quorum sensing. Catalyzes the transformation of S-ribosylhomocysteine (RHC) to homocysteine (HC) and 4,5-dihydroxy-2,3-pentadione (DPD). This Lactobacillus delbrueckii subsp. bulgaricus (strain ATCC BAA-365 / Lb-18) protein is S-ribosylhomocysteine lyase 1.